A 224-amino-acid polypeptide reads, in one-letter code: UPF0758 protein AHA_0160 (224 aa).

Residues 102–224 (PLTSPQLTRD…TVSFAERGWL (123 aa)) enclose the MPN domain. Zn(2+) contacts are provided by H173, H175, and D186. The JAMM motif motif lies at 173-186 (HNHPSGVAEPSRAD).

It belongs to the UPF0758 family.

This is UPF0758 protein AHA_0160 from Aeromonas hydrophila subsp. hydrophila (strain ATCC 7966 / DSM 30187 / BCRC 13018 / CCUG 14551 / JCM 1027 / KCTC 2358 / NCIMB 9240 / NCTC 8049).